The sequence spans 2183 residues: DNA polymerase epsilon catalytic subunit A (2183 aa).

Zn(2+) is bound by residues cysteine 2066, cysteine 2069, cysteine 2090, and cysteine 2093. The CysA-type zinc finger occupies 2066–2093 (CFKCKNPCDLDLCKDSCCTKSGFRCPLC). Residues cysteine 2124, cysteine 2127, cysteine 2139, and cysteine 2141 each coordinate [4Fe-4S] cluster. The CysB motif signature appears at 2124-2141 (CDKCRRVKEYELTEFCPC).

Belongs to the DNA polymerase type-B family. Heterotetramer. Consists of 4 subunits: POL2, DPB2, DPB3 and DPB4. [4Fe-4S] cluster is required as a cofactor.

It localises to the nucleus. The catalysed reaction is DNA(n) + a 2'-deoxyribonucleoside 5'-triphosphate = DNA(n+1) + diphosphate. DNA polymerase II participates in chromosomal DNA replication. The polypeptide is DNA polymerase epsilon catalytic subunit A (POL2) (Yarrowia lipolytica (strain CLIB 122 / E 150) (Yeast)).